The sequence spans 448 residues: Tryptophan dimethylallyltransferase 1 (448 aa).

L-tryptophan contacts are provided by residues 80–81 and Glu89; that span reads IL. The substrate site is built by Arg100, Lys186, and Tyr188. L-tryptophan contacts are provided by Tyr190 and Arg251. Positions 264, 266, 268, 350, 352, 416, and 420 each coordinate substrate.

This sequence belongs to the tryptophan dimethylallyltransferase family. As to quaternary structure, homodimer.

It catalyses the reaction L-tryptophan + dimethylallyl diphosphate = 4-(3-methylbut-2-enyl)-L-tryptophan + diphosphate. Its pathway is alkaloid biosynthesis; ergot alkaloid biosynthesis. In terms of biological role, catalyzes the first step of ergot alkaloid biosynthesis. Ergot alkaloids, which are produced by endophyte fungi, can enhance plant host fitness, but also cause livestock toxicosis to host plants. This chain is Tryptophan dimethylallyltransferase 1 (dmaW1), found in Epichloe coenophiala (Tall fescue endophyte fungus).